A 361-amino-acid polypeptide reads, in one-letter code: Eukaryotic translation initiation factor 3 subunit F (361 aa).

Composition is skewed to low complexity over residues 1–11 (MATPVVSASGP) and 21–42 (AAPASASASVPAPTPAPAAAAV). The segment at 1-42 (MATPVVSASGPPATPAPAPVAAPASASASVPAPTPAPAAAAV) is disordered. Alanine 2 is modified (N-acetylalanine). The residue at position 50 (serine 50) is a Phosphoserine; by CDK11; in vitro. A compositionally biased stretch (low complexity) spans 55-78 (AAAATTAAPGQTPASAQAPAQTPA). Positions 55–86 (AAAATTAAPGQTPASAQAPAQTPAPALPGPAL) are disordered. In terms of domain architecture, MPN spans 96 to 226 (VRLHPVILAS…IKAYVSTLMG (131 aa)). At lysine 242 the chain carries N6-acetyllysine. Serine 262 is modified (phosphoserine).

It belongs to the eIF-3 subunit F family. Component of the eukaryotic translation initiation factor 3 (eIF-3) complex, which is composed of 13 subunits: EIF3A, EIF3B, EIF3C, EIF3D, EIF3E, EIF3F, EIF3G, EIF3H, EIF3I, EIF3J, EIF3K, EIF3L and EIF3M. The eIF-3 complex appears to include 3 stable modules: module A is composed of EIF3A, EIF3B, EIF3G and EIF3I; module B is composed of EIF3F, EIF3H, and EIF3M; and module C is composed of EIF3C, EIF3D, EIF3E, EIF3K and EIF3L. EIF3C of module C binds EIF3B of module A and EIF3H of module B, thereby linking the three modules. EIF3J is a labile subunit that binds to the eIF-3 complex via EIF3B. The eIF-3 complex interacts with RPS6KB1 under conditions of nutrient depletion. Mitogenic stimulation leads to binding and activation of a complex composed of MTOR and RPTOR, leading to phosphorylation and release of RPS6KB1 and binding of EIF4B to eIF-3. Interacts with RNF139; the interaction leads to protein translation inhibitions in a ubiquitination-dependent manner. Interacts with DTX1, the interaction is required for deubiquitinating activity towards NOTCH1. Post-translationally, phosphorylation is enhanced upon serum stimulation. Phosphorylated during apoptosis by caspase-processed CDK11.

It localises to the cytoplasm. The catalysed reaction is Thiol-dependent hydrolysis of ester, thioester, amide, peptide and isopeptide bonds formed by the C-terminal Gly of ubiquitin (a 76-residue protein attached to proteins as an intracellular targeting signal).. Component of the eukaryotic translation initiation factor 3 (eIF-3) complex, which is required for several steps in the initiation of protein synthesis. The eIF-3 complex associates with the 40S ribosome and facilitates the recruitment of eIF-1, eIF-1A, eIF-2:GTP:methionyl-tRNAi and eIF-5 to form the 43S pre-initiation complex (43S PIC). The eIF-3 complex stimulates mRNA recruitment to the 43S PIC and scanning of the mRNA for AUG recognition. The eIF-3 complex is also required for disassembly and recycling of post-termination ribosomal complexes and subsequently prevents premature joining of the 40S and 60S ribosomal subunits prior to initiation. The eIF-3 complex specifically targets and initiates translation of a subset of mRNAs involved in cell proliferation, including cell cycling, differentiation and apoptosis, and uses different modes of RNA stem-loop binding to exert either translational activation or repression. In terms of biological role, deubiquitinates activated NOTCH1, promoting its nuclear import, thereby acting as a positive regulator of Notch signaling. This Macaca fascicularis (Crab-eating macaque) protein is Eukaryotic translation initiation factor 3 subunit F.